A 135-amino-acid polypeptide reads, in one-letter code: Ribosome-binding factor A (135 aa).

The protein belongs to the RbfA family. Monomer. Binds 30S ribosomal subunits, but not 50S ribosomal subunits or 70S ribosomes.

It is found in the cytoplasm. In terms of biological role, one of several proteins that assist in the late maturation steps of the functional core of the 30S ribosomal subunit. Associates with free 30S ribosomal subunits (but not with 30S subunits that are part of 70S ribosomes or polysomes). Required for efficient processing of 16S rRNA. May interact with the 5'-terminal helix region of 16S rRNA. This is Ribosome-binding factor A from Sinorhizobium fredii (strain NBRC 101917 / NGR234).